The chain runs to 61 residues: MMAKKLAIFLFNDDEMCMLHAFLYLRELNERGYEAKLIIEGKATVIPLKYAEGSIVSKHYK.

This is an uncharacterized protein from Archaeoglobus fulgidus (strain ATCC 49558 / DSM 4304 / JCM 9628 / NBRC 100126 / VC-16).